The chain runs to 563 residues: Pre-hexon-linking protein IIIa (563 aa).

A peripentonal hexon-tethering domain region spans residues 1 to 117 (MRKRRTLTAP…ALLHRVSKYN (117 aa)). The tract at residues 148–261 (GSLTALNSFL…FTDSVSISRD (114 aa)) is binding to hexon-linking protein. Ser235 is modified (phosphoserine; by host). Thr284 carries the post-translational modification Phosphothreonine; by host. The disordered stretch occupies residues 449 to 471 (RTESRSVSRVPTPASSRRSSVAM). Phosphoserine; by host is present on residues Ser452 and Ser456. Over residues 462-471 (ASSRRSSVAM) the composition is skewed to low complexity. Phosphoserine; by host occurs at positions 475 and 486. The segment at 524–543 (SSAISSDESDDGMSKPDKFL) is disordered. The propeptide occupies 549 to 563 (GNPFAHLRPKLGRCL).

This sequence belongs to the adenoviridae hexon-linking protein IIIa family. In terms of assembly, interacts with hexon proteins; this interaction tethers the peripentonal hexons to hexons situated in the facet. Interacts with the penton protein (via N-terminus). Interacts with packaging protein 3; this interaction is required to promote correct genome packaging. Post-translationally, cleaved near the C-terminus by the viral protease during virion maturation to form the mature protein.

Its subcellular location is the virion. It localises to the host nucleus. In terms of biological role, structural component of the virion that acts as a cement protein on the capsid exterior which mediates the interactions between the hexons, including the peripentonal hexons, and reaches all the way to the penton vertices. Two hexon linking proteins IIIa, one from each facet, stabilize the unique edge interface between a pair of facets. As the virus enters the host cell, hexon linking proteins IIIa are shed concomitant with virion acidification in the endosome. During virus assembly, seems to play a role in the serotype specificity of the packaging of viral DNA via its interaction with packaging protein 3. The sequence is that of Pre-hexon-linking protein IIIa from Canis lupus familiaris (Dog).